Here is a 507-residue protein sequence, read N- to C-terminus: Glutamyl-tRNA(Gln) amidotransferase subunit A, mitochondrial (507 aa).

Residues K79 and S160 each act as charge relay system in the active site. S184 acts as the Acyl-ester intermediate in catalysis.

Belongs to the amidase family. GatA subfamily. In terms of assembly, subunit of the heterotrimeric GatCAB amidotransferase (AdT) complex, composed of A, B and C subunits.

The protein localises to the mitochondrion. It carries out the reaction L-glutamyl-tRNA(Gln) + L-glutamine + ATP + H2O = L-glutaminyl-tRNA(Gln) + L-glutamate + ADP + phosphate + H(+). In terms of biological role, allows the formation of correctly charged Gln-tRNA(Gln) through the transamidation of misacylated Glu-tRNA(Gln) in the mitochondria. The reaction takes place in the presence of glutamine and ATP through an activated gamma-phospho-Glu-tRNA(Gln). The polypeptide is Glutamyl-tRNA(Gln) amidotransferase subunit A, mitochondrial (Drosophila pseudoobscura pseudoobscura (Fruit fly)).